Consider the following 668-residue polypeptide: DNA ligase (668 aa).

NAD(+)-binding positions include 34 to 38 (DTEYD), 83 to 84 (SL), and glutamate 114. Lysine 116 (N6-AMP-lysine intermediate) is an active-site residue. 4 residues coordinate NAD(+): arginine 137, glutamate 171, lysine 286, and lysine 310. Residues cysteine 404, cysteine 407, cysteine 422, and cysteine 427 each coordinate Zn(2+). Positions 588-668 (NSDSIIANKT…FFDLLKSEKG (81 aa)) constitute a BRCT domain.

This sequence belongs to the NAD-dependent DNA ligase family. LigA subfamily. Mg(2+) serves as cofactor. Mn(2+) is required as a cofactor.

It catalyses the reaction NAD(+) + (deoxyribonucleotide)n-3'-hydroxyl + 5'-phospho-(deoxyribonucleotide)m = (deoxyribonucleotide)n+m + AMP + beta-nicotinamide D-nucleotide.. Its function is as follows. DNA ligase that catalyzes the formation of phosphodiester linkages between 5'-phosphoryl and 3'-hydroxyl groups in double-stranded DNA using NAD as a coenzyme and as the energy source for the reaction. It is essential for DNA replication and repair of damaged DNA. The sequence is that of DNA ligase from Mycoplasma capricolum subsp. capricolum (strain California kid / ATCC 27343 / NCTC 10154).